Reading from the N-terminus, the 343-residue chain is Fe-S cluster assembly protein DRE2 (343 aa).

An N-terminal SAM-like domain region spans residues Met-1 to Ile-188. Residues Lys-189 to Asp-240 form a linker region. 2 stretches are compositionally biased toward acidic residues: residues Leu-195–Asp-206 and Asp-218–Ile-228. Residues Leu-195–Ile-228 are disordered. Positions 247, 258, 261, and 263 each coordinate [2Fe-2S] cluster. The segment at Cys-247 to Cys-263 is fe-S binding site A. [4Fe-4S] cluster is bound by residues Cys-306, Cys-309, Cys-317, and Cys-320. Short sequence motifs (cx2C motif) lie at residues Cys-306–Cys-309 and Cys-317–Cys-320. Residues Cys-306–Cys-320 are fe-S binding site B.

The protein belongs to the anamorsin family. As to quaternary structure, monomer. Interacts with TAH18. Interacts with MIA40. The cofactor is [2Fe-2S] cluster. [4Fe-4S] cluster serves as cofactor.

It is found in the cytoplasm. The protein resides in the mitochondrion intermembrane space. Its function is as follows. Component of the cytosolic iron-sulfur (Fe-S) protein assembly (CIA) machinery required for the maturation of extramitochondrial Fe-S proteins. Part of an electron transfer chain functioning in an early step of cytosolic Fe-S biogenesis, facilitating the de novo assembly of a [4Fe-4S] cluster on the scaffold complex CFD1-NBP35. Electrons are transferred to DRE2 from NADPH via the FAD- and FMN-containing protein TAH18. TAH18-DRE2 are also required for the assembly of the diferric tyrosyl radical cofactor of ribonucleotide reductase (RNR), probably by providing electrons for reduction during radical cofactor maturation in the catalytic small subunit RNR2. In Kluyveromyces lactis (strain ATCC 8585 / CBS 2359 / DSM 70799 / NBRC 1267 / NRRL Y-1140 / WM37) (Yeast), this protein is Fe-S cluster assembly protein DRE2.